The chain runs to 169 residues: Der GTPase-activating protein YihI (169 aa).

Disordered regions lie at residues 1–75 and 144–169; these read MKPS…IPLG and GLSYDDDEEEEEDEKQEDMMRLLRGN. Basic residues predominate over residues 10-19; that stretch reads SKGHAKARRK. The segment covering 20 to 30 has biased composition (basic and acidic residues); sequence TREELDQEARD. The segment covering 31-40 has biased composition (basic residues); it reads RKRQKKRRGH. Positions 49–58 are enriched in polar residues; that stretch reads GNTTSGSKGQ. Positions 147–159 are enriched in acidic residues; that stretch reads YDDDEEEEEDEKQ. Basic and acidic residues predominate over residues 160 to 169; that stretch reads EDMMRLLRGN.

The protein belongs to the YihI family. Interacts with Der.

Its function is as follows. A GTPase-activating protein (GAP) that modifies Der/EngA GTPase function. May play a role in ribosome biogenesis. In Escherichia coli (strain 55989 / EAEC), this protein is Der GTPase-activating protein YihI.